We begin with the raw amino-acid sequence, 69 residues long: FXYD domain-containing ion transport regulator 11 (69 aa).

A signal peptide spans 1–22 (MSQLTELVLLTVFLALFSRAEA). Residues 23–33 (NPFVYNYEALR) lie on the Extracellular side of the membrane. The helical transmembrane segment at 34 to 54 (IGGLVFTCVLVAGAVTALCWG) threads the bilayer. At 55–69 (QCKPKRKHDDDASKI) the chain is on the cytoplasmic side.

This sequence belongs to the FXYD family. In terms of tissue distribution, detected in adult gill and in larval skin at 2 days post-fertilization (at protein level). In adult gill, strong expression is found in the basal regions of the secondary lamellae.

It localises to the cell membrane. May modulate the activity of a sodium/potassium-transporting ATPase. The chain is FXYD domain-containing ion transport regulator 11 from Danio rerio (Zebrafish).